Reading from the N-terminus, the 118-residue chain is Large ribosomal subunit protein uL23c (118 aa).

It belongs to the universal ribosomal protein uL23 family. Part of the 50S ribosomal subunit.

It localises to the plastid. The protein localises to the chloroplast. Functionally, binds to 23S rRNA. This Stigeoclonium helveticum (Green alga) protein is Large ribosomal subunit protein uL23c (rpl23).